The following is a 206-amino-acid chain: LexA repressor (206 aa).

A DNA-binding region (H-T-H motif) is located at residues 28 to 48; sequence RAEIASELGFKSANAAEEHLK. Active-site for autocatalytic cleavage activity residues include Ser122 and Lys160.

This sequence belongs to the peptidase S24 family. In terms of assembly, homodimer.

It catalyses the reaction Hydrolysis of Ala-|-Gly bond in repressor LexA.. In terms of biological role, represses a number of genes involved in the response to DNA damage (SOS response), including recA and lexA. In the presence of single-stranded DNA, RecA interacts with LexA causing an autocatalytic cleavage which disrupts the DNA-binding part of LexA, leading to derepression of the SOS regulon and eventually DNA repair. This Tolumonas auensis (strain DSM 9187 / NBRC 110442 / TA 4) protein is LexA repressor.